A 315-amino-acid polypeptide reads, in one-letter code: tRNA-cytidine(32) 2-sulfurtransferase (315 aa).

Residues 54–59 carry the PP-loop motif motif; it reads SGGKDS. Residues cysteine 129, cysteine 132, and cysteine 220 each contribute to the [4Fe-4S] cluster site.

This sequence belongs to the TtcA family. In terms of assembly, homodimer. Mg(2+) serves as cofactor. It depends on [4Fe-4S] cluster as a cofactor.

It localises to the cytoplasm. The enzyme catalyses cytidine(32) in tRNA + S-sulfanyl-L-cysteinyl-[cysteine desulfurase] + AH2 + ATP = 2-thiocytidine(32) in tRNA + L-cysteinyl-[cysteine desulfurase] + A + AMP + diphosphate + H(+). The protein operates within tRNA modification. Its function is as follows. Catalyzes the ATP-dependent 2-thiolation of cytidine in position 32 of tRNA, to form 2-thiocytidine (s(2)C32). The sulfur atoms are provided by the cysteine/cysteine desulfurase (IscS) system. The protein is tRNA-cytidine(32) 2-sulfurtransferase of Bordetella avium (strain 197N).